Reading from the N-terminus, the 84-residue chain is MKTLLLTLVVVTIVCLDLGYTMKCKICHFDTCRAGELKVCASGEKYCFKESWREAREVKIIRGCSSSCPEKKNVFCCSTNDCNW.

The first 21 residues, 1-21, serve as a signal peptide directing secretion; the sequence is MKTLLLTLVVVTIVCLDLGYT. Disulfide bonds link Cys24–Cys47, Cys27–Cys32, Cys40–Cys64, Cys68–Cys76, and Cys77–Cys82.

Belongs to the three-finger toxin family. Ancestral subfamily. Orphan group IV sub-subfamily. As to expression, expressed by the venom gland.

The protein resides in the secreted. In terms of biological role, binds and inhibits muscular and neuronal nicotinic acetylcholine receptors (nAChR). This Bungarus multicinctus (Many-banded krait) protein is Neurotoxin BM10-1-like.